A 345-amino-acid polypeptide reads, in one-letter code: UDP-N-acetylenolpyruvoylglucosamine reductase (345 aa).

The 171-residue stretch at 16 to 186 (LSVSASCIKV…TAVGIFLKKE (171 aa)) folds into the FAD-binding PCMH-type domain. Arginine 162 is an active-site residue. Catalysis depends on serine 232, which acts as the Proton donor. Glutamate 328 is an active-site residue.

This sequence belongs to the MurB family. Requires FAD as cofactor.

It localises to the cytoplasm. The catalysed reaction is UDP-N-acetyl-alpha-D-muramate + NADP(+) = UDP-N-acetyl-3-O-(1-carboxyvinyl)-alpha-D-glucosamine + NADPH + H(+). The protein operates within cell wall biogenesis; peptidoglycan biosynthesis. Functionally, cell wall formation. This is UDP-N-acetylenolpyruvoylglucosamine reductase from Pectobacterium atrosepticum (strain SCRI 1043 / ATCC BAA-672) (Erwinia carotovora subsp. atroseptica).